The primary structure comprises 83 residues: UPF0729 protein CBG02799 (83 aa).

Residues 51 to 83 (QEKKEEEEEKEKSCCSTEAENTTEVTTETKKDQ) are disordered. Positions 67 to 76 (TEAENTTEVT) are enriched in low complexity.

It belongs to the UPF0729 family.

This Caenorhabditis briggsae protein is UPF0729 protein CBG02799.